The chain runs to 482 residues: Solute carrier family 49 member A3 (482 aa).

12 helical membrane-spanning segments follow: residues 41–61 (WFVL…WISF), 81–101 (YLSL…SWLI), 109–129 (AIVF…GAIV), 150–170 (LCAI…SVWF), 181–201 (IASM…PSVV), 206–226 (YIAH…ILAT), 264–284 (VILM…SSFL), 296–316 (LFAG…AFVC), 330–350 (VKTC…VINF), 355–375 (VLVA…SPVG), 390–410 (SSTG…MILF), and 437–457 (TSML…IIFF).

The protein belongs to the major facilitator superfamily.

It localises to the membrane. The polypeptide is Solute carrier family 49 member A3 (slc49a3) (Xenopus tropicalis (Western clawed frog)).